A 78-amino-acid chain; its full sequence is uncharacterized protein (78 aa).

This is an uncharacterized protein from Methanocaldococcus jannaschii (strain ATCC 43067 / DSM 2661 / JAL-1 / JCM 10045 / NBRC 100440) (Methanococcus jannaschii).